The following is a 314-amino-acid chain: Olfactory receptor 9A4 (314 aa).

At 1 to 24 the chain is on the extracellular side; sequence MLMNYSSATEFYLLGFPGSEELHH. An N-linked (GlcNAc...) asparagine glycan is attached at Asn4. A helical membrane pass occupies residues 25 to 45; it reads ILFAIFFFFYLVTLMGNTVII. Residues 46 to 53 lie on the Cytoplasmic side of the membrane; it reads MIVCVDKR. A helical membrane pass occupies residues 54–74; sequence LQSPMYFFLGHLSALEILVTT. Residues 75–99 lie on the Extracellular side of the membrane; the sequence is IIVPVMLWGLLLPGMQTIYLSACVV. A disulfide bridge connects residues Cys97 and Cys189. Residues 100–120 form a helical membrane-spanning segment; the sequence is QLFLYLAVGTTEFALLGAMAV. The Cytoplasmic segment spans residues 121–139; it reads DRYVAVCNPLRYNIIMNRH. A helical transmembrane segment spans residues 140 to 160; it reads TCNFVVLVSWVFGFLFQIWPV. At 161–197 the chain is on the extracellular side; sequence YVMFQLTYCKSNVVNNFFCDRGQLLKLSCNNTLFTEF. A glycan (N-linked (GlcNAc...) asparagine) is linked at Asn190. A helical transmembrane segment spans residues 198 to 217; sequence ILFLMAVFVLFGSLIPTIVS. Residues 218-237 are Cytoplasmic-facing; sequence NAYIISTILKIPSSSGRRKS. A helical membrane pass occupies residues 238 to 258; that stretch reads FSTCASHFTCVVIGYGSCLFL. Residues 259 to 271 lie on the Extracellular side of the membrane; it reads YVKPKQTQAADYN. A helical membrane pass occupies residues 272 to 292; sequence WVVSLMVSVVTPFLNPFIFTL. Topologically, residues 293 to 314 are cytoplasmic; sequence RNDKVIEALRDGVKRCCQLFRN.

It belongs to the G-protein coupled receptor 1 family.

The protein resides in the cell membrane. In terms of biological role, odorant receptor. The protein is Olfactory receptor 9A4 (OR9A4) of Homo sapiens (Human).